A 218-amino-acid chain; its full sequence is 25.3 kDa vesicle transport protein SEC22-1 (218 aa).

The Cytoplasmic portion of the chain corresponds to 1 to 192 (MVKMTLIARV…DKAKDLNRQA (192 aa)). Residues 6–120 (LIARVTDGLP…YAFIKFDTFI (115 aa)) enclose the Longin domain. The 61-residue stretch at 135 to 195 (NIAKLNDELY…KDLNRQALIR (61 aa)) folds into the v-SNARE coiled-coil homology domain. The chain crosses the membrane as a helical; Anchor for type IV membrane protein span at residues 193-213 (LIRKWAPVAIVFGVVFLLFWV). The Vesicular portion of the chain corresponds to 214-218 (KNKLW).

It belongs to the synaptobrevin family. Interacts with SEC24A. Mainly expressed in flowers and siliques, to a lower extent in seedlings, and barely in roots and leaves.

The protein resides in the golgi apparatus membrane. The protein localises to the endoplasmic reticulum membrane. Its function is as follows. V-SNARE involved in vesicle trafficking from the ER to the Golgi complex and required for early secretion. Involved in endoplasmic reticulum (ER) biogenesis and functions as well as for Golgi-stack integrity. Essential for gametophytes development. Involved in cesium Cs(+) accumulation, a non-essential cation. This is 25.3 kDa vesicle transport protein SEC22-1 from Arabidopsis thaliana (Mouse-ear cress).